The sequence spans 239 residues: Phosphoribosylaminoimidazole-succinocarboxamide synthase (239 aa).

It belongs to the SAICAR synthetase family.

It catalyses the reaction 5-amino-1-(5-phospho-D-ribosyl)imidazole-4-carboxylate + L-aspartate + ATP = (2S)-2-[5-amino-1-(5-phospho-beta-D-ribosyl)imidazole-4-carboxamido]succinate + ADP + phosphate + 2 H(+). Its pathway is purine metabolism; IMP biosynthesis via de novo pathway; 5-amino-1-(5-phospho-D-ribosyl)imidazole-4-carboxamide from 5-amino-1-(5-phospho-D-ribosyl)imidazole-4-carboxylate: step 1/2. This is Phosphoribosylaminoimidazole-succinocarboxamide synthase from Shouchella clausii (strain KSM-K16) (Alkalihalobacillus clausii).